Consider the following 264-residue polypeptide: Glutamate racemase (264 aa).

Substrate-binding positions include 10–11 (DS) and 42–43 (YG). The active-site Proton donor/acceptor is C73. Substrate is bound at residue 74–75 (NT). C183 functions as the Proton donor/acceptor in the catalytic mechanism. 184–185 (TH) provides a ligand contact to substrate.

It belongs to the aspartate/glutamate racemases family.

It carries out the reaction L-glutamate = D-glutamate. It participates in cell wall biogenesis; peptidoglycan biosynthesis. Functionally, provides the (R)-glutamate required for cell wall biosynthesis. The protein is Glutamate racemase of Streptococcus pyogenes serotype M6 (strain ATCC BAA-946 / MGAS10394).